A 142-amino-acid polypeptide reads, in one-letter code: Phosphoribosyl-AMP cyclohydrolase (142 aa).

Position 92 (aspartate 92) interacts with Mg(2+). Cysteine 93 contributes to the Zn(2+) binding site. Mg(2+) is bound by residues aspartate 94 and aspartate 96. Residues cysteine 109 and cysteine 116 each contribute to the Zn(2+) site.

Belongs to the PRA-CH family. In terms of assembly, homodimer. Mg(2+) serves as cofactor. Zn(2+) is required as a cofactor.

Its subcellular location is the cytoplasm. It carries out the reaction 1-(5-phospho-beta-D-ribosyl)-5'-AMP + H2O = 1-(5-phospho-beta-D-ribosyl)-5-[(5-phospho-beta-D-ribosylamino)methylideneamino]imidazole-4-carboxamide. It functions in the pathway amino-acid biosynthesis; L-histidine biosynthesis; L-histidine from 5-phospho-alpha-D-ribose 1-diphosphate: step 3/9. Catalyzes the hydrolysis of the adenine ring of phosphoribosyl-AMP. The chain is Phosphoribosyl-AMP cyclohydrolase from Halorhodospira halophila (strain DSM 244 / SL1) (Ectothiorhodospira halophila (strain DSM 244 / SL1)).